Consider the following 563-residue polypeptide: MNFVEAIRRRISAAVVQALEGARNAKEVNVGPIPPFALEVPREKQHGDFATNVAMLMAREARMNPRQLAEKIVARIDRGDWLKDVQVAGPGFINFTLHHAWLYPVLPAVQQADEAYGASKVGAGRRVQVEFVSANPTGLLHMGNARGAALGDTLANLLRLAGFDVQKEFYINDAGNQIENFAKSLEARYLQLLGRDVPFPEEGYHGEDIVETMRGLIAKEGDKYLALESSLRREMLVKYALREKLDAIRRTLERFGVVYDVWFSEQSLHDSGAIQQTLERLRANGYIYENEGALWFKATALGEEKDEVLVRSNGIPTYFAADIAYHKNKFDRGFDWVINIWGADHHGHVSRMKNAVKAVGYDPKKLDVILMQLVRLYKGGEIVRMSKRTGQYITLDELIEEVGKDAARFFFVMRGADAHLDFDLDLAKRQSSENPVFYVQYAHARICSILRTAQEAGYAVPQGQQVEAGLDLTVLDHPAELALIRKIADLPDEVARAATQMEPHRMARYAQDLAALFHSFYTHCRVLTDEKELRDARLLLVDDSRIVLRNVLHCMGLTAPERM.

The 'HIGH' region motif lies at 134–144 (ANPTGLLHMGN).

This sequence belongs to the class-I aminoacyl-tRNA synthetase family. Monomer.

It localises to the cytoplasm. The enzyme catalyses tRNA(Arg) + L-arginine + ATP = L-arginyl-tRNA(Arg) + AMP + diphosphate. In Heliobacterium modesticaldum (strain ATCC 51547 / Ice1), this protein is Arginine--tRNA ligase.